The following is a 124-amino-acid chain: Splicing factor 3B subunit 6-like protein (124 aa).

Positions 16 to 29 are interaction with pre-mRNA branch site; sequence EVNRVLYVRNLPFN. The region spanning 19 to 94 is the RRM domain; that stretch reads RVLYVRNLPF…RYLIVLYYQH (76 aa).

The protein resides in the nucleus. Functionally, may be necessary for the splicing of pre-mRNA. The chain is Splicing factor 3B subunit 6-like protein from Arabidopsis thaliana (Mouse-ear cress).